The following is a 193-amino-acid chain: Acyl carrier protein phosphodiesterase (193 aa).

Belongs to the AcpH family.

The catalysed reaction is holo-[ACP] + H2O = apo-[ACP] + (R)-4'-phosphopantetheine + H(+). Converts holo-ACP to apo-ACP by hydrolytic cleavage of the phosphopantetheine prosthetic group from ACP. This is Acyl carrier protein phosphodiesterase from Escherichia coli O6:K15:H31 (strain 536 / UPEC).